The following is a 144-amino-acid chain: D-aminoacyl-tRNA deacylase (144 aa).

The Gly-cisPro motif, important for rejection of L-amino acids motif lies at 136–137; sequence GP.

This sequence belongs to the DTD family. Homodimer.

Its subcellular location is the cytoplasm. The catalysed reaction is glycyl-tRNA(Ala) + H2O = tRNA(Ala) + glycine + H(+). It carries out the reaction a D-aminoacyl-tRNA + H2O = a tRNA + a D-alpha-amino acid + H(+). Functionally, an aminoacyl-tRNA editing enzyme that deacylates mischarged D-aminoacyl-tRNAs. Also deacylates mischarged glycyl-tRNA(Ala), protecting cells against glycine mischarging by AlaRS. Acts via tRNA-based rather than protein-based catalysis; rejects L-amino acids rather than detecting D-amino acids in the active site. By recycling D-aminoacyl-tRNA to D-amino acids and free tRNA molecules, this enzyme counteracts the toxicity associated with the formation of D-aminoacyl-tRNA entities in vivo and helps enforce protein L-homochirality. This is D-aminoacyl-tRNA deacylase from Haemophilus influenzae (strain PittEE).